Consider the following 411-residue polypeptide: Putative polysaccharide ligase RC0486 (411 aa).

Helical transmembrane passes span 15-35 (LGMLAGLSAAATVTIFLLISF), 78-98 (GITMLFTAWCFISCLFAIHLI), 101-121 (LATFTQVFILLFLGFAVSNSA), 133-153 (LIFGILTAILLFFIEYSSNGF), 166-186 (MLDRGCALLSITAWVAIIILL), 207-227 (ISDSLASFLGFGIGGVIFILT), 233-253 (IFFKLIAISLITGSLLFPVIA), 328-348 (ILQITLELGIIGLILFLCLVY), 361-381 (NFKAISYACFINYYIIGMISY), and 383-403 (IWQIWWISSGIWVLVLMKLLV).

Belongs to the O-antigen ligase family.

Its subcellular location is the membrane. This chain is Putative polysaccharide ligase RC0486, found in Rickettsia conorii (strain ATCC VR-613 / Malish 7).